The sequence spans 571 residues: MDRAVGRVALENEEREAKNTWRFVFRIAIFLLIVITLAISAAALVYSMEASTPGDLVGIPTVISRAEEKITSALSSNQDVVDRIYKQVALESPLALLNTESVIMNAITSLSYQINGAANNSGCGAPVHDPDYIGGIGKELIVDDASDVTSFYPSAFQEHLNFIPAPTTGSGCTRIPSFDISATHYCYTHNVILSGCRDHSHSHQYLALGVLRTSATGRVFFSTLRSINLDDNQNRKSCSVSATPLGCDMLCSKITETEEEDYSSVTPTSMVHGRLGFDGQYHEKDLDVITLFKDWVANYPGVGGGSFIDNRVWFPVYGGLKPNSPSDTAQEGRYVIYKRYNDTCPDEQDYQIRMAKSSYKPGRFGGKRVQQAILSIKVSTSLGEDPVLTVPPNTVTLMGPEGRVLTVGTSHFLYQRGSSYFSPALLYPMTVNNKTATLHSPYTFNAFTRPGSVPCQASARCPNSCVTGVYTDPYPLVFHRNHTLRGVFGTMLDDKQARLNPVSAVFDNISRSRITRVSSSSTKAAYTTSTCFKVVKTNKTYCLSIAEISNTLFGEFRIVPLLVEILKEDGV.

The Intravirion portion of the chain corresponds to 1-26 (MDRAVGRVALENEEREAKNTWRFVFR). A helical membrane pass occupies residues 27-47 (IAIFLLIVITLAISAAALVYS). Over 48 to 571 (MEASTPGDLV…LVEILKEDGV (524 aa)) the chain is Virion surface. N-linked (GlcNAc...) asparagine; by host glycosylation is present at N119. An important for interaction with fusion/F protein region spans residues 124-152 (GAPVHDPDYIGGIGKELIVDDASDVTSFY). 3 cysteine pairs are disulfide-bonded: C172-C196, C186-C247, and C238-C251. The interval 234–239 (NRKSCS) is involved in neuraminidase activity. N-linked (GlcNAc...) asparagine; by host glycosylation is found at N341 and N433. Intrachain disulfides connect C344/C461 and C455/C465. 3 N-linked (GlcNAc...) asparagine; by host glycosylation sites follow: N481, N508, and N538. Residues C531 and C542 are joined by a disulfide bond.

This sequence belongs to the paramyxoviruses hemagglutinin-neuraminidase family. In terms of assembly, homotetramer; composed of disulfide-linked homodimers. Interacts with F protein trimer. Interacts with host CG-1B; this interaction inhibits viral adsorption and replication rather than internalization.

Its subcellular location is the virion membrane. The protein localises to the host cell membrane. It carries out the reaction Hydrolysis of alpha-(2-&gt;3)-, alpha-(2-&gt;6)-, alpha-(2-&gt;8)- glycosidic linkages of terminal sialic acid residues in oligosaccharides, glycoproteins, glycolipids, colominic acid and synthetic substrates.. Mediates the viral entry into the host cell together with fusion/F protein. Attaches the virus to sialic acid-containing cell receptors and thereby initiates infection. Binding of HN protein to the receptor induces a conformational change that allows the F protein to trigger virion/cell membranes fusion. Its function is as follows. Neuraminidase activity ensures the efficient spread of the virus by dissociating the mature virions from the neuraminic acid containing glycoproteins. In Gallus gallus (Chicken), this protein is Hemagglutinin-neuraminidase (HN).